Reading from the N-terminus, the 637-residue chain is Threonine--tRNA ligase (637 aa).

Positions 1-65 (MIAIQLPDGS…EADEALSIIT (65 aa)) constitute a TGS domain. The tract at residues 246–537 (DHRKLGRELD…LIEEHAGALP (292 aa)) is catalytic. C337, H388, and H514 together coordinate Zn(2+).

It belongs to the class-II aminoacyl-tRNA synthetase family. As to quaternary structure, homodimer. Zn(2+) serves as cofactor.

The protein localises to the cytoplasm. The catalysed reaction is tRNA(Thr) + L-threonine + ATP = L-threonyl-tRNA(Thr) + AMP + diphosphate + H(+). Functionally, catalyzes the attachment of threonine to tRNA(Thr) in a two-step reaction: L-threonine is first activated by ATP to form Thr-AMP and then transferred to the acceptor end of tRNA(Thr). Also edits incorrectly charged L-seryl-tRNA(Thr). This is Threonine--tRNA ligase from Leptothrix cholodnii (strain ATCC 51168 / LMG 8142 / SP-6) (Leptothrix discophora (strain SP-6)).